Consider the following 246-residue polypeptide: UDP-N-acetyl-D-mannosaminuronic acid transferase (246 aa).

This sequence belongs to the glycosyltransferase 26 family.

The enzyme catalyses UDP-N-acetyl-alpha-D-mannosaminouronate + N-acetyl-alpha-D-glucosaminyl-di-trans,octa-cis-undecaprenyl diphosphate = beta-D-ManNAcA-(1-&gt;4)-alpha-D-GlcNAc-di-trans,octa-cis-undecaprenyl diphosphate + UDP + H(+). The protein operates within bacterial outer membrane biogenesis; enterobacterial common antigen biosynthesis. Functionally, catalyzes the synthesis of Und-PP-GlcNAc-ManNAcA (Lipid II), the second lipid-linked intermediate involved in enterobacterial common antigen (ECA) synthesis. This chain is UDP-N-acetyl-D-mannosaminuronic acid transferase, found in Serratia proteamaculans (strain 568).